The following is a 58-amino-acid chain: UPF0434 protein Sfri_2386 (58 aa).

The protein belongs to the UPF0434 family.

The protein is UPF0434 protein Sfri_2386 of Shewanella frigidimarina (strain NCIMB 400).